A 124-amino-acid polypeptide reads, in one-letter code: U13-hexatoxin-Mg1a (124 aa).

Positions 1–17 are cleaved as a signal peptide; that stretch reads MKLSALVFVASVMLVAA. A propeptide spanning residues 18–52 is cleaved from the precursor; sequence SPVKDVEEPVETHLAADLKTIEELAKYEEAAVQKR. 4 disulfides stabilise this stretch: C54/C72, C65/C78, C69/C116, and C71/C87.

As to expression, expressed by the venom gland.

It is found in the secreted. No toxicity is observed upon intracranial injection into mice and intrathorax injection into crickets. This Macrothele gigas (Japanese funnel web spider) protein is U13-hexatoxin-Mg1a.